The primary structure comprises 153 residues: NADPH-dependent 7-cyano-7-deazaguanine reductase (153 aa).

Residues 1 to 17 (MTDTRNLTQLGSKTQAP) show a composition bias toward polar residues. Residues 1–23 (MTDTRNLTQLGSKTQAPASPEAA) form a disordered region. Cys51 (thioimide intermediate) is an active-site residue. Residue Asp58 is the Proton donor of the active site. Residues 73–75 (VES) and 92–93 (HE) each bind substrate.

The protein belongs to the GTP cyclohydrolase I family. QueF type 1 subfamily.

It localises to the cytoplasm. The catalysed reaction is 7-aminomethyl-7-carbaguanine + 2 NADP(+) = 7-cyano-7-deazaguanine + 2 NADPH + 3 H(+). It functions in the pathway tRNA modification; tRNA-queuosine biosynthesis. Its function is as follows. Catalyzes the NADPH-dependent reduction of 7-cyano-7-deazaguanine (preQ0) to 7-aminomethyl-7-deazaguanine (preQ1). This is NADPH-dependent 7-cyano-7-deazaguanine reductase from Chelativorans sp. (strain BNC1).